The sequence spans 164 residues: Diphosphoinositol polyphosphate phosphohydrolase 3-beta (164 aa).

Residues Arg9, 17 to 19 (KKR), and 38 to 40 (SSR) contribute to the substrate site. The region spanning 17–144 (KKRAACLCFR…VHAEYLQKLK (128 aa)) is the Nudix hydrolase domain. The Mg(2+) site is built by Gly49 and Glu65. The short motif at 50-71 (GGMEPEEEPGGAAVREVFEEAG) is the Nudix box element. Glu68 serves as the catalytic Proton acceptor. Mg(2+) is bound at residue Glu69. Substrate contacts are provided by residues 89–91 (RKH), Arg115, and Lys133. The interval 144 to 164 (KLGGSPTNGNSVAPSPPEGDP) is disordered.

This sequence belongs to the Nudix hydrolase family. DIPP subfamily. Mg(2+) serves as cofactor. Requires Mn(2+) as cofactor.

It localises to the cytoplasm. It carries out the reaction diphospho-myo-inositol polyphosphate + H2O = myo-inositol polyphosphate + phosphate.. The enzyme catalyses P(1),P(6)-bis(5'-adenosyl) hexaphosphate + H2O = adenosine 5'-pentaphosphate + AMP + 2 H(+). The catalysed reaction is P(1),P(5)-bis(5'-adenosyl) pentaphosphate + H2O = adenosine 5'-tetraphosphate + AMP + 2 H(+). Its function is as follows. Cleaves a beta-phosphate from the diphosphate groups in PP-InsP5 (diphosphoinositol pentakisphosphate), suggesting that it may play a role in signal transduction. Also able to catalyze the hydrolysis of dinucleoside oligophosphates, with Ap6A and Ap5A being the preferred substrates. The major reaction products are ADP and p4a from Ap6A and ADP and ATP from Ap5A. Also able to hydrolyze 5-phosphoribose 1-diphosphate. The polypeptide is Diphosphoinositol polyphosphate phosphohydrolase 3-beta (Bos taurus (Bovine)).